A 611-amino-acid chain; its full sequence is Podocan (611 aa).

Residues 1-23 (MAGSRGLPLLLLVLQLFLGPVLP) form the signal peptide. One can recognise an LRRNT domain in the interval 60 to 97 (PEPGPATVDCPRDCACSQEGVVDCGGIDLREFPGDLPE). LRR repeat units follow at residues 98 to 119 (HTNH…ELSR), 122 to 145 (RLET…AFEH), 148 to 169 (SLNY…LPNA), 170 to 190 (LISV…TFGQ), and 193 to 213 (NLRS…PDHM). An N-linked (GlcNAc...) asparagine glycan is attached at N215. LRR repeat units lie at residues 219 to 239 (NVEI…HLPP), 240 to 261 (ALYK…AFSE), 264 to 284 (NLRE…DNET), 290 to 311 (SLEY…LPRS), 312 to 332 (LVLL…VLTP), 335 to 358 (NLEY…AFQG), 361 to 382 (KLHT…LPRR), 383 to 403 (VRTL…DFAT), 406 to 427 (FLEE…RDAF), 432 to 453 (LLRS…LPKN), 477 to 490 (QLRE…RLRS), 503 to 523 (GLQL…GLPP), 524 to 545 (SLEY…AFDS), 548 to 569 (NLKG…ESAF), and 574 to 583 (HLQVLDIEGN). Residue N282 is glycosylated (N-linked (GlcNAc...) asparagine). Residue N411 is glycosylated (N-linked (GlcNAc...) asparagine). Positions 585–611 (EFGNGSKDKDEEEEEEEEEEDEEEETR) are disordered. Positions 594–611 (DEEEEEEEEEEDEEEETR) are enriched in acidic residues.

Belongs to the small leucine-rich proteoglycan (SLRP) family. SLRP class V subfamily. As to quaternary structure, binds to type I collagen. In terms of processing, N-glycosylated. As to expression, kidney. Expressed in podocytes and likely vascular endothelial cells within the glomerulus.

The protein localises to the secreted. It is found in the extracellular space. Its subcellular location is the extracellular matrix. Its function is as follows. Negatively regulates cell proliferation and cell migration, especially in smooth muscle cells. This chain is Podocan (Podn), found in Mus musculus (Mouse).